Reading from the N-terminus, the 588-residue chain is Secreted triacylglycerol lipase LIP1 (588 aa).

The signal sequence occupies residues 1–20 (MRFSGFVSGLGLGLLTAVSA). The active-site Acyl-ester intermediate is the serine 258. N-linked (GlcNAc...) asparagine glycosylation occurs at asparagine 400.

This sequence belongs to the type-B carboxylesterase/lipase family.

The protein resides in the secreted. The catalysed reaction is a triacylglycerol + H2O = a diacylglycerol + a fatty acid + H(+). In terms of biological role, secreted acylglycerol lipase required for efficient utilization of saturated triglyceride lipids. Is not involved in virulence. In Gibberella zeae (strain ATCC MYA-4620 / CBS 123657 / FGSC 9075 / NRRL 31084 / PH-1) (Wheat head blight fungus), this protein is Secreted triacylglycerol lipase LIP1.